Consider the following 161-residue polypeptide: MAGILRLVVQRPPGGLQTVTKGVESLIGTDWIRHKFTKSRIPDKVFQASPEDHEKYGGDPQNPHKLHIVTRIKSTRRRPYWEKDIIKMLGLEKSHTPQVHKNIPSVNSKLKVVKHLIRIQPLKLPQGLPTEENMSNMYLKSTGELVVQWHLKPVEQKTHES.

Residues 1 to 34 constitute a mitochondrion transit peptide; sequence MAGILRLVVQRPPGGLQTVTKGVESLIGTDWIRH.

The protein belongs to the universal ribosomal protein uL30 family. In terms of assembly, component of the mitochondrial ribosome large subunit (39S) which comprises a 16S rRNA and about 50 distinct proteins.

Its subcellular location is the mitochondrion. The protein is Large ribosomal subunit protein uL30m (MRPL30) of Macaca fascicularis (Crab-eating macaque).